The chain runs to 151 residues: Deoxyuridine 5'-triphosphate nucleotidohydrolase (151 aa).

Substrate is bound by residues 70–72, asparagine 83, 87–89, and methionine 97; these read RSG and LID.

The protein belongs to the dUTPase family. The cofactor is Mg(2+).

It catalyses the reaction dUTP + H2O = dUMP + diphosphate + H(+). The protein operates within pyrimidine metabolism; dUMP biosynthesis; dUMP from dCTP (dUTP route): step 2/2. Its function is as follows. This enzyme is involved in nucleotide metabolism: it produces dUMP, the immediate precursor of thymidine nucleotides and it decreases the intracellular concentration of dUTP so that uracil cannot be incorporated into DNA. This Mannheimia succiniciproducens (strain KCTC 0769BP / MBEL55E) protein is Deoxyuridine 5'-triphosphate nucleotidohydrolase.